A 151-amino-acid polypeptide reads, in one-letter code: Probable cGMP 3',5'-cyclic phosphodiesterase subunit delta (151 aa).

Belongs to the PDE6D/unc-119 family. In terms of assembly, interacts with Pde6.

Its subcellular location is the nucleus. The protein localises to the cytoplasm. In Drosophila grimshawi (Hawaiian fruit fly), this protein is Probable cGMP 3',5'-cyclic phosphodiesterase subunit delta.